Here is a 301-residue protein sequence, read N- to C-terminus: CRISPR-associated endonuclease Cas1 (301 aa).

Residues E133, H200, and D213 each coordinate Mn(2+).

This sequence belongs to the CRISPR-associated endonuclease Cas1 family. Homodimer, forms a heterotetramer with a Cas2 homodimer. Mg(2+) is required as a cofactor. The cofactor is Mn(2+).

Its function is as follows. CRISPR (clustered regularly interspaced short palindromic repeat), is an adaptive immune system that provides protection against mobile genetic elements (viruses, transposable elements and conjugative plasmids). CRISPR clusters contain spacers, sequences complementary to antecedent mobile elements, and target invading nucleic acids. CRISPR clusters are transcribed and processed into CRISPR RNA (crRNA). Acts as a dsDNA endonuclease. Involved in the integration of spacer DNA into the CRISPR cassette. This chain is CRISPR-associated endonuclease Cas1, found in Clostridium sp. (strain SY8519).